Reading from the N-terminus, the 533-residue chain is Zona pellucida sperm-binding protein 3 receptor (533 aa).

A signal peptide spans 1-28; the sequence is MFPRLQAVSAPALLQITLMAVLLAPVLG. Sushi domains are found at residues 29 to 88, 89 to 150, 151 to 215, 216 to 275, 276 to 342, 343 to 408, and 409 to 467; these read DCGP…FCAK, KRCR…ECVI, VKCD…TCEK, VICR…TCEP, NGCI…GCER, VCCP…ACES, and AVCL…KCEW. 14 disulfides stabilise this stretch: Cys30/Cys74, Cys60/Cys86, Cys91/Cys132, Cys118/Cys148, Cys153/Cys196, Cys182/Cys213, Cys218/Cys260, Cys246/Cys273, Cys278/Cys328, Cys312/Cys340, Cys345/Cys393, Cys378/Cys406, Cys411/Cys452, and Cys438/Cys465. N-linked (GlcNAc...) asparagine glycans are attached at residues Asn68 and Asn77. Asn185, Asn191, and Asn200 each carry an N-linked (GlcNAc...) asparagine glycan. 2 N-linked (GlcNAc...) asparagine glycosylation sites follow: Asn433 and Asn455.

As to quaternary structure, homooligomer; disulfide-linked. May contain 6-8 monomers per oligomer. Post-translationally, the N-terminus may be blocked. In terms of tissue distribution, testis. Not expressed in heart, brain, liver or kidney.

Its subcellular location is the cytoplasmic vesicle. It is found in the secretory vesicle. The protein resides in the acrosome lumen. Probably involved in the formation of the dense core and M1 domain of the acrosome. May also regulate the release of certain secretory proteins following the acrosomal reaction. The sequence is that of Zona pellucida sperm-binding protein 3 receptor (ZP3R) from Cavia porcellus (Guinea pig).